The sequence spans 296 residues: Probable endonuclease 4 (296 aa).

Zn(2+)-binding residues include His69, His109, Glu160, Asp194, His197, His231, Asp244, His246, and Glu276.

This sequence belongs to the AP endonuclease 2 family. The cofactor is Zn(2+).

The catalysed reaction is Endonucleolytic cleavage to 5'-phosphooligonucleotide end-products.. In terms of biological role, endonuclease IV plays a role in DNA repair. It cleaves phosphodiester bonds at apurinic or apyrimidinic (AP) sites, generating a 3'-hydroxyl group and a 5'-terminal sugar phosphate. The sequence is that of Probable endonuclease 4 from Sulfurovum sp. (strain NBC37-1).